We begin with the raw amino-acid sequence, 182 residues long: Large ribosomal subunit protein uL6 (182 aa).

This sequence belongs to the universal ribosomal protein uL6 family. In terms of assembly, part of the 50S ribosomal subunit.

Its function is as follows. This protein binds to the 23S rRNA, and is important in its secondary structure. It is located near the subunit interface in the base of the L7/L12 stalk, and near the tRNA binding site of the peptidyltransferase center. The polypeptide is Large ribosomal subunit protein uL6 (Haloquadratum walsbyi (strain DSM 16790 / HBSQ001)).